The primary structure comprises 200 residues: LHFPL tetraspan subfamily member 6 protein (200 aa).

Residues 1–23 form the signal peptide; sequence MASSLTCTGVIWALLSFLSAATS. 3 helical membrane-spanning segments follow: residues 84–104, 123–143, and 166–186; these read ICTI…LTAL, GIQF…PLGW, and IGWA…LCTW.

It belongs to the LHFP family.

The protein resides in the membrane. In Rattus norvegicus (Rat), this protein is LHFPL tetraspan subfamily member 6 protein.